The primary structure comprises 351 residues: MSTLLIDLQGQELSQEEVELLSHPLVAGLILFTRNFHDRAQMQALIQSIRQRVKKPLLITVDQEGGRVQRFREGFTQLPAMQAFACLIDDPVQQTNMAQQAGWQMAAEMTALGIDLSFAPVLDLGHQCQAIGDRSFHSQAEMTLNLASAFIDGMHQVGMAATGKHFPGHGHVIADSHLETPYDERPKQQIFAQDIQPFQQLIQQNMLNAIMPAHVIYSQCDPQPASGSAYWLKQVLRQQLGFNGAIFSDDLGMKGAGFMGNFVQRCEQSLQAGCDLLLLCNEREGVIQVLDNLKLSETEPHFALRQQRLQQLFKRKTIRWSELEATSRWLENRKILTALQQRWLDNKANKH.

Substrate is bound by residues D62, R70, R134, and K164–H165. Residue H177 is the Proton donor/acceptor of the active site. The Nucleophile role is filled by D249.

Belongs to the glycosyl hydrolase 3 family. NagZ subfamily. Monomer.

The protein resides in the cytoplasm. The enzyme catalyses Hydrolysis of terminal non-reducing N-acetyl-D-hexosamine residues in N-acetyl-beta-D-hexosaminides.. It participates in cell wall biogenesis; peptidoglycan recycling. Functionally, plays a role in peptidoglycan recycling by cleaving the terminal beta-1,4-linked N-acetylglucosamine (GlcNAc) from peptide-linked peptidoglycan fragments, giving rise to free GlcNAc, anhydro-N-acetylmuramic acid and anhydro-N-acetylmuramic acid-linked peptides. This Pasteurella multocida (strain Pm70) protein is Beta-hexosaminidase.